Here is a 142-residue protein sequence, read N- to C-terminus: Large ribosomal subunit protein uL13 (142 aa).

This sequence belongs to the universal ribosomal protein uL13 family. As to quaternary structure, part of the 50S ribosomal subunit.

In terms of biological role, this protein is one of the early assembly proteins of the 50S ribosomal subunit, although it is not seen to bind rRNA by itself. It is important during the early stages of 50S assembly. The sequence is that of Large ribosomal subunit protein uL13 from Helicobacter hepaticus (strain ATCC 51449 / 3B1).